The chain runs to 2209 residues: MWNDIELLTNDDTGSGYLSVGSRKEHGTALYQVDLLVKISSEKASLNPKIQACSLSDGFIIVADQSVILLDSICRSLQLHLVFDTEVDVVGLCQEGKFLLVGERSGNLHLIHVTSKQTLLTNAFVQKANDENRRTYQNLVIEKDGSNEGTYYMLLLTYSGFFCITNLQLLKIQQAIENVDFSTAKKLQGQIKSSFISTENYHTLGCLSLVAGDLASEVPVIIGGTGNCAFSKWEPDSSKKGMTVKNLIDAEIIKGAKKFQLIDNLLFVLDTDNVLSLWDIYTLTPVWNWPSLHVEEFLLTTEADSPSSVTWQGITNLKLIALTASANKKMKNLMVYSLPTMEILYSLEVSSVSSLVQTGISTDTIYLLEGVCKNDPKLSEDSVSVLVLRCLTEALPENRLSRLLHKHRFAEAESFAIQFGLDVELVYKVKSNHILEKLALSSVDASEQTEWQQLVDDAKENLHKIQDDEFVVNYCLKAQWITYETTQEMLNYAKTRLLKKEDKTALIYSDGLKEVLRAHAKLTTFYGAFGPEKFSGSSWIEFLNNEDDLKDIFLQLKEGNLVCAQYLWLRHRANFESRFDVKMLESLLNSMSASVSLQKLCPWFKNDVIPFVRRTVPEGQIILAKWLEQAARNLELTDKANWPENGLQLAEIFFTAEKTDELGLASSWHWISLKDYQNTEEVCQLRTLVNNLRELITLHRKYNCKLALSDFEKENTTTIVFRMFDKVLAPELIPSILEKFIRVYMREHDLQEEELLLLYIEDLLNRCSSKSTSLFETAWEAKAMAVIACLSDTDLIFDAVLKIMYAAVVPWSAAVEQLVKQHLEMDHPKVKLLQESYKLMEMKKLLRGYGIREVNLLNKEIMRVVRYILKQDVPSSLEDALKVAQAFMLSDDEIYSLRIIDLIDREQGEDCLLLLKSLPPAEAEKTAERVIIWARLALQEEPDHSKEGKAWRMSVAKTSVDILKILCDIQKDNLQKKDECEEMLKLFKEVASLQENFEVFLSFEDYSNSSLVADLREQHIKAHEVAQAKHKPGSTPEPIAAEVRSPSMESKLHRQALALQMSKQELEAELTLRALKDGNIKTALKKCSDLFKYHCNADTGKLLFLTCQKLCQMLADNVPVTVPVGLNLPSMIHDLASQAATICSPDFLLDALELCKHTLMAVELSRQCQMDDCGILMKASFGTHKDPYEEWSYSDFFSEDGIVLESQMVLPVIYELISSLVPLAESKRYPLESTSLPYCSLNEGDGLVLPVINSISALLQNLQESSQWELALRFVVGSFGTCLQHSVSNFMNATLSEKLFGETTLVKSRHVVMELKEKAVIFIRENATTLLHKVFNCRLVDLDLALGYCTLLPQKDVFENLWKLIDKAWQNYDKILAISLVGSELASLYQEIEMGLKFRELSTDAQWGIRLGKLGISFQPVFRQHFLTKKDLIKALVENIDMDTSLILEYCSTFQLDCDAVLQLFIETLLHNTNAGQGQGDASMDSAKRRHPKLLAKALEMVPLLTSTKDLVISLSGILHKLDPYDYEMIEVVLKVIERADEKITNININQALSILKHLKSYRRISPPVDLEYQYMLEHVITLPSAAQTRLPFHLIFFGTAQNFWKILSTELSEESFPTLLLISKLMKFSLDTLYVSTAKHVFEKKLKPKLLKLTQAKSSTLINKEITKITQTIESCLLSIVNPEWAVAIAISLAQDIPEGSFKISALKFCLYLAERWLQNIPSQDEKREKAEALLKKLHIQYRRSGTEAVLIAHKLNTEEYLRVIGKPAHLIVSLYEHPSINQRIQNSSGTDYPDIHAAAKEIAEVNEINLEKVWDMLLEKWLCPSTKPGEKPSELFELQEDEALRRVQYLLLSRPIDYSSRMLFVFATSTTTTLGMHQLTFAHRTRALQCLFYLADKETIESLFKKPIEEVKSYLRCITFLASFETLNIPITYELFCSSPKEGMIKGLWKNHSHESMAVRLVTELCLEYKIYDLQLWNGLLQKLLGFNMIPYLRKVLKAISSIHSLWQVPYFSKAWQRVIQIPLLSASCPLSPDQLSDCSESLIAVLECPVSGDLDLIGVARQYIQLELPAFALACLMLMPHSEKRHQQIKNFLGSCDPQVILKQLEEHMNTGQLAGFSHQIRSLILNNIINKKEFGILAKTKYFQMLKMHAMNTNNITELVNYLANDLSLDEASVLITEYSKHCGKPVPPDTAPCEILKMFLSGLS.

Thr13 carries the phosphothreonine; by TTK modification. At Ser15 the chain carries Phosphoserine; by TTK. The residue at position 1035 (Thr1035) is a Phosphothreonine. Ser1045 carries the post-translational modification Phosphoserine.

Interacts with ZW10; the interaction is required for stable association with the kinetochore. Component of the RZZ complex composed of KNTC1/ROD, ZW10 and ZWILCH; in the complex interacts directly with ZWILCH. As to expression, high expression in testis.

The protein resides in the cytoplasm. It is found in the nucleus. It localises to the chromosome. Its subcellular location is the centromere. The protein localises to the kinetochore. The protein resides in the cytoskeleton. It is found in the spindle. Essential component of the mitotic checkpoint, which prevents cells from prematurely exiting mitosis. Required for the assembly of the dynein-dynactin and MAD1-MAD2 complexes onto kinetochores. Its function related to the spindle assembly machinery is proposed to depend on its association in the mitotic RZZ complex. The protein is Kinetochore-associated protein 1 (KNTC1) of Homo sapiens (Human).